We begin with the raw amino-acid sequence, 410 residues long: ORC1-type DNA replication protein 2 (410 aa).

ATP-binding positions include Gly60–Thr65, Tyr213, and Arg225.

It belongs to the CDC6/cdc18 family.

Its function is as follows. Involved in regulation of DNA replication. Binds DNA. This is ORC1-type DNA replication protein 2 (orc2) from Aeropyrum pernix (strain ATCC 700893 / DSM 11879 / JCM 9820 / NBRC 100138 / K1).